Consider the following 360-residue polypeptide: Photosystem II protein D1 2 (360 aa).

A run of 3 helical transmembrane segments spans residues 29 to 46 (YVGWFGVLMIPTLLTATT), 118 to 133 (HFLIGVFCYMGREWEL), and 142 to 156 (WICVAFSAPVAAATA). Position 118 (His118) interacts with chlorophyll a. Tyr126 serves as a coordination point for pheophytin a. 2 residues coordinate [CaMn4O5] cluster: Asp170 and Glu189. Residues 197-218 (FHMLGVAGVFGGSLFSAMHGSL) traverse the membrane as a helical segment. His198 is a chlorophyll a binding site. A quinone-binding positions include His215 and 264–265 (SF). A Fe cation-binding site is contributed by His215. Residue His272 coordinates Fe cation. Residues 274 to 288 (FLGAWPVVGIWFTAL) form a helical membrane-spanning segment. Positions 332, 333, 342, and 344 each coordinate [CaMn4O5] cluster. Positions 345 to 360 (AGEQAPVALQAPAING) are excised as a propeptide.

It belongs to the reaction center PufL/M/PsbA/D family. PSII is composed of 1 copy each of membrane proteins PsbA, PsbB, PsbC, PsbD, PsbE, PsbF, PsbH, PsbI, PsbJ, PsbK, PsbL, PsbM, PsbT, PsbX, PsbY, PsbZ, Psb30/Ycf12, peripheral proteins PsbO, CyanoQ (PsbQ), PsbU, PsbV and a large number of cofactors. It forms dimeric complexes. Requires The D1/D2 heterodimer binds P680, chlorophylls that are the primary electron donor of PSII, and subsequent electron acceptors. It shares a non-heme iron and each subunit binds pheophytin, quinone, additional chlorophylls, carotenoids and lipids. D1 provides most of the ligands for the Mn4-Ca-O5 cluster of the oxygen-evolving complex (OEC). There is also a Cl(-1) ion associated with D1 and D2, which is required for oxygen evolution. The PSII complex binds additional chlorophylls, carotenoids and specific lipids. as cofactor. In terms of processing, tyr-161 forms a radical intermediate that is referred to as redox-active TyrZ, YZ or Y-Z. C-terminally processed by CtpA; processing is essential to allow assembly of the oxygen-evolving complex and thus photosynthetic growth.

It is found in the cellular thylakoid membrane. The catalysed reaction is 2 a plastoquinone + 4 hnu + 2 H2O = 2 a plastoquinol + O2. Functionally, photosystem II (PSII) is a light-driven water:plastoquinone oxidoreductase that uses light energy to abstract electrons from H(2)O, generating O(2) and a proton gradient subsequently used for ATP formation. It consists of a core antenna complex that captures photons, and an electron transfer chain that converts photonic excitation into a charge separation. The D1/D2 (PsbA/PsbD) reaction center heterodimer binds P680, the primary electron donor of PSII as well as several subsequent electron acceptors. The protein is Photosystem II protein D1 2 of Picosynechococcus sp. (strain ATCC 27264 / PCC 7002 / PR-6) (Agmenellum quadruplicatum).